We begin with the raw amino-acid sequence, 248 residues long: Small ribosomal subunit protein uS5 (248 aa).

The segment at 1–87 (MEDKKLSSAK…NPRFQRNNKD (87 aa)) is disordered. Low complexity predominate over residues 8–23 (SAKPATSSKPAPKAPS). Positions 57-87 (VAFEKRNFTSGDKTKKPTDSKNPRFQRNNKD) are enriched in basic and acidic residues. One can recognise an S5 DRBM domain in the interval 94–157 (YEEKIVDIAR…KDAHNNLVEV (64 aa)).

It belongs to the universal ribosomal protein uS5 family. As to quaternary structure, part of the 30S ribosomal subunit. Contacts proteins S4 and S8.

With S4 and S12 plays an important role in translational accuracy. Functionally, located at the back of the 30S subunit body where it stabilizes the conformation of the head with respect to the body. This chain is Small ribosomal subunit protein uS5, found in Mycoplasmopsis synoviae (strain 53) (Mycoplasma synoviae).